A 592-amino-acid chain; its full sequence is Sodium- and chloride-dependent transporter XTRP3A (592 aa).

The Cytoplasmic segment spans residues 1–7; the sequence is MEKARPQ. A helical transmembrane segment spans residues 8–28; the sequence is WGHPLQFVFACISYAVGLGNV. Residues 29-42 are Extracellular-facing; sequence WRFPYLCQMYGGGS. Residues 43 to 63 traverse the membrane as a helical segment; that stretch reads FLVPYIIMLIVEGMPLLYLEL. At 64-79 the chain is on the cytoplasmic side; sequence AVGQRMRQGSIGAWRT. The helical transmembrane segment at 80-100 threads the bilayer; that stretch reads ISPYLSGVGVASVVVSFFLSM. Residues 101–165 lie on the Extracellular side of the membrane; it reads YYNVINAWGF…ISPSIQENGG (65 aa). N-linked (GlcNAc...) asparagine glycosylation occurs at Asn131. The helical transmembrane segment at 166–186 threads the bilayer; that stretch reads VQWEPALCLTLAWLMVYLCIL. The Cytoplasmic portion of the chain corresponds to 187-194; that stretch reads RGTESTGK. Residues 195 to 215 traverse the membrane as a helical segment; it reads VVYFTASMPYCVLIIYLVRGL. At 216–241 the chain is on the extracellular side; it reads TLHGATNGLMYMFTPKMEQLANPKAW. The chain crosses the membrane as a helical span at residues 242–262; it reads INAATQIFFSLGLGFGSLIAF. The Cytoplasmic portion of the chain corresponds to 263-276; that stretch reads ASYNEPSNNCQKHA. Residues 277-297 form a helical membrane-spanning segment; it reads IIVSIINSSTSIFASIVTFSI. At 298–389 the chain is on the extracellular side; the sequence is YGFKATFNYE…EAIKNMEVSQ (92 aa). Residues 390–410 form a helical membrane-spanning segment; the sequence is LWSVLYFFMLLMLGIGSMLGN. Residues 411 to 431 lie on the Cytoplasmic side of the membrane; that stretch reads TAAILTPLTDSKVISSYLPKE. Residues 432–452 form a helical membrane-spanning segment; sequence AISGLVCLINCAVGMVFTMEA. Over 453 to 465 the chain is Extracellular; the sequence is GNYWFDIFNDYAA. Residues 466 to 486 form a helical membrane-spanning segment; sequence TLSLLLIVLVETIAVCYVYGL. Topologically, residues 487–504 are cytoplasmic; that stretch reads KRFESDLRAMTGRTLSWY. The helical transmembrane segment at 505 to 525 threads the bilayer; it reads WKVMWAFVSPLLIVGLFIFYL. Residues 526–554 are Extracellular-facing; it reads SDYILTGTLQYQAWDATQGQLVTKDYPPH. Residues 555–575 form a helical membrane-spanning segment; that stretch reads ALAVIGLLVASSTMCIPLVAL. The Cytoplasmic portion of the chain corresponds to 576-592; sequence GTFIRNRLKRGGSAPVA.

Belongs to the sodium:neurotransmitter symporter (SNF) (TC 2.A.22) family. SLC6A20 subfamily. As to expression, expressed in brain, kidney, small intestine, thymus, spleen and lung. In the brain, expressed in cerebellum, cortex and brain stem. Not detected in liver, muscle or heart. In brain, widespread in various regions, including the meninges, choroid plexus, cortex, hippocampus and thalamus.

It is found in the apical cell membrane. The enzyme catalyses L-proline(out) + chloride(out) + 2 Na(+)(out) = L-proline(in) + chloride(in) + 2 Na(+)(in). It carries out the reaction 4-hydroxy-L-proline(out) + chloride(out) + 2 Na(+)(out) = 4-hydroxy-L-proline(in) + chloride(in) + 2 Na(+)(in). The catalysed reaction is 2-methyl-2-(methylamino)propanoate(out) + chloride(out) + 2 Na(+)(out) = 2-methyl-2-(methylamino)propanoate(in) + chloride(in) + 2 Na(+)(in). It catalyses the reaction L-pipecolate(out) + chloride(out) + 2 Na(+)(out) = L-pipecolate(in) + chloride(in) + 2 Na(+)(in). The enzyme catalyses glycine betaine(out) + chloride(out) + 2 Na(+)(out) = glycine betaine(in) + chloride(in) + 2 Na(+)(in). It carries out the reaction glycine(out) + chloride(out) + 2 Na(+)(out) = glycine(in) + chloride(in) + 2 Na(+)(in). Mediates the Na(+)- and Cl(-)-dependent uptake of imino acids such as L-proline, N-methyl-L-proline and pipecolate as well as N-methylated amino acids. Also transports glycine, regulates proline and glycine homeostasis in the brain playing a role in the modulation of NMDAR currents. This Mus musculus (Mouse) protein is Sodium- and chloride-dependent transporter XTRP3A.